The sequence spans 403 residues: MAVQTLDDLLNAGVEGRAVLVRSDLNVPLDGDRITDPGRIIASAPTLKALAEAGAKVIVTAHLGRPEGEPDPQYSLAPVAAKLAEVLGRNVQLAGDVVGQDALARAEGLTDGDVLLLENIRFDPRETSKDEAERTKLAKALVELVGDDGAFVSDGFGVVHRAQASVYEVAKLLPHYAGTLVDAEIKVLGKLTAEPERPYAVVLGGSKVSDKLAVIEALAPKVDTLVIGGGMYYTFLAAQGLSVGNSLCEESMIDTCKALLEQYADVIHIPQDVVIADSFSADAESKIVSVLEIPDGWMGLDIGPQSVRRFAAILTSAKTVFWNGPMGVFEFEKFAAGTKGVAEAIIEATGKGAYSVVGGGDSAAAVRQLGLPEDGFSHISTGGGASLEYLEGKELPGIAVLEG.

Substrate contacts are provided by residues 24-26, R39, 62-65, R121, and R161; these read DLN and HLGR. Residues K211, G299, E330, and 359 to 362 contribute to the ATP site; that span reads GGDS.

It belongs to the phosphoglycerate kinase family. Monomer.

The protein resides in the cytoplasm. It catalyses the reaction (2R)-3-phosphoglycerate + ATP = (2R)-3-phospho-glyceroyl phosphate + ADP. The protein operates within carbohydrate degradation; glycolysis; pyruvate from D-glyceraldehyde 3-phosphate: step 2/5. The chain is Phosphoglycerate kinase from Rhodococcus opacus (strain B4).